A 694-amino-acid polypeptide reads, in one-letter code: Elongation factor G (694 aa).

The tr-type G domain occupies 10–285 (EKTRNIGIMA…AVLDYLPSPV (276 aa)). GTP is bound by residues 19 to 26 (AHIDAGKT), 83 to 87 (DTPGH), and 137 to 140 (NKMD).

The protein belongs to the TRAFAC class translation factor GTPase superfamily. Classic translation factor GTPase family. EF-G/EF-2 subfamily.

The protein resides in the cytoplasm. Functionally, catalyzes the GTP-dependent ribosomal translocation step during translation elongation. During this step, the ribosome changes from the pre-translocational (PRE) to the post-translocational (POST) state as the newly formed A-site-bound peptidyl-tRNA and P-site-bound deacylated tRNA move to the P and E sites, respectively. Catalyzes the coordinated movement of the two tRNA molecules, the mRNA and conformational changes in the ribosome. The chain is Elongation factor G from Limosilactobacillus fermentum (strain NBRC 3956 / LMG 18251) (Lactobacillus fermentum).